A 295-amino-acid chain; its full sequence is Translational activator of cytochrome c oxidase 1 (295 aa).

N6-acetyllysine is present on Lys162. Positions 190 to 225 (VEDREKKAVNLERALELAIEAGAEDVREAEDEEEEK) form a coiled coil.

This sequence belongs to the TACO1 family.

It is found in the mitochondrion. Acts as a translational activator of mitochondrially-encoded cytochrome c oxidase 1. This is Translational activator of cytochrome c oxidase 1 from Rattus norvegicus (Rat).